The following is a 219-amino-acid chain: Sporamin A (219 aa).

Positions 1-23 (MKALTLALFLALSLYLLPNPAHS) are cleaved as a signal peptide.

It belongs to the protease inhibitor I3 (leguminous Kunitz-type inhibitor) family. As to expression, accumulates specifically in tuberous roots and tubers upon tuberization. Sporamin accounts 60 to 80% of the total soluble protein of the organ.

The protein resides in the vacuole. Functionally, major tuberous root protein. The protein is Sporamin A (GSPO-A1) of Ipomoea batatas (Sweet potato).